Here is a 79-residue protein sequence, read N- to C-terminus: Sec-independent protein translocase protein TatA (79 aa).

Residues 1-21 (MGGFTSIWHWVIVLLVIVLLF) traverse the membrane as a helical segment. The segment at 54-79 (ELKTLDAQATQTKVHETSEIKSKQES) is disordered. Over residues 66-79 (KVHETSEIKSKQES) the composition is skewed to basic and acidic residues.

It belongs to the TatA/E family. In terms of assembly, the Tat system comprises two distinct complexes: a TatABC complex, containing multiple copies of TatA, TatB and TatC subunits, and a separate TatA complex, containing only TatA subunits. Substrates initially bind to the TatABC complex, which probably triggers association of the separate TatA complex to form the active translocon.

It is found in the cell inner membrane. In terms of biological role, part of the twin-arginine translocation (Tat) system that transports large folded proteins containing a characteristic twin-arginine motif in their signal peptide across membranes. TatA could form the protein-conducting channel of the Tat system. This is Sec-independent protein translocase protein TatA from Helicobacter pylori (strain J99 / ATCC 700824) (Campylobacter pylori J99).